We begin with the raw amino-acid sequence, 496 residues long: L-arabinose isomerase (496 aa).

4 residues coordinate Mn(2+): glutamate 302, glutamate 329, histidine 346, and histidine 445.

This sequence belongs to the arabinose isomerase family. Mn(2+) serves as cofactor.

The catalysed reaction is beta-L-arabinopyranose = L-ribulose. It participates in carbohydrate degradation; L-arabinose degradation via L-ribulose; D-xylulose 5-phosphate from L-arabinose (bacterial route): step 1/3. Its function is as follows. Catalyzes the conversion of L-arabinose to L-ribulose. This Thermotoga maritima (strain ATCC 43589 / DSM 3109 / JCM 10099 / NBRC 100826 / MSB8) protein is L-arabinose isomerase.